The primary structure comprises 2313 residues: Serine/threonine-protein kinase smg-1 (2313 aa).

A compositionally biased stretch (basic and acidic residues) spans 779 to 791; it reads NRKSSDKKPKSTT. The tract at residues 779-798 is disordered; sequence NRKSSDKKPKSTTEDVPPPA. Residues 1045-1528 form the FAT domain; sequence ARERLQLVES…VFQVVSGAAS (484 aa). One copy of the HEAT repeat lies at 1478 to 1514; sequence VHVWKEILPQLFARLSHPSDHIRKTLVDLISRVCTAA. The region spanning 1746 to 2091 is the PI3K/PI4K catalytic domain; that stretch reads VADNVTILPT…DTIELFQLRV (346 aa). Residues 1752 to 1758 are G-loop; the sequence is ILPTKTR. The catalytic loop stretch occupies residues 1954–1962; that stretch reads GLGDRHLDN. The activation loop stretch occupies residues 1974 to 1998; it reads HIDYNICFDKGKILRIPETVPFRLS. Positions 2281–2313 constitute an FATC domain; the sequence is RKLSPREEADVLIAEATSSANLAQMYEGWTAWV.

The protein belongs to the PI3/PI4-kinase family. In terms of assembly, component of a post-splicing multiprotein NMD complex. The cofactor is Mn(2+).

It is found in the cytoplasm. The catalysed reaction is L-seryl-[protein] + ATP = O-phospho-L-seryl-[protein] + ADP + H(+). It carries out the reaction L-threonyl-[protein] + ATP = O-phospho-L-threonyl-[protein] + ADP + H(+). In terms of biological role, serine/threonine protein kinase involved in mRNA surveillance. Recognizes the substrate consensus sequence [ST]-Q. Involved in nonsense-mediated decay (NMD) of mRNAs containing premature stop codons by phosphorylating smg-2. The protein is Serine/threonine-protein kinase smg-1 (smg-1) of Caenorhabditis briggsae.